We begin with the raw amino-acid sequence, 369 residues long: 3-isopropylmalate dehydrogenase (369 aa).

Residue 76-89 (GPKWDRNPSHLRPE) coordinates NAD(+). Substrate is bound by residues R96, R106, R134, and D223. Mg(2+) contacts are provided by D223, D247, and D251. 281-293 (GSAPDIAGQNKAN) lines the NAD(+) pocket.

Belongs to the isocitrate and isopropylmalate dehydrogenases family. LeuB type 1 subfamily. Homodimer. It depends on Mg(2+) as a cofactor. Mn(2+) is required as a cofactor.

The protein localises to the cytoplasm. The catalysed reaction is (2R,3S)-3-isopropylmalate + NAD(+) = 4-methyl-2-oxopentanoate + CO2 + NADH. It participates in amino-acid biosynthesis; L-leucine biosynthesis; L-leucine from 3-methyl-2-oxobutanoate: step 3/4. Functionally, catalyzes the oxidation of 3-carboxy-2-hydroxy-4-methylpentanoate (3-isopropylmalate) to 3-carboxy-4-methyl-2-oxopentanoate. The product decarboxylates to 4-methyl-2 oxopentanoate. This chain is 3-isopropylmalate dehydrogenase (leuB), found in Priestia megaterium (strain DSM 319 / IMG 1521) (Bacillus megaterium).